The primary structure comprises 236 residues: Leucyl/phenylalanyl-tRNA--protein transferase (236 aa).

It belongs to the L/F-transferase family.

It is found in the cytoplasm. The catalysed reaction is N-terminal L-lysyl-[protein] + L-leucyl-tRNA(Leu) = N-terminal L-leucyl-L-lysyl-[protein] + tRNA(Leu) + H(+). It carries out the reaction N-terminal L-arginyl-[protein] + L-leucyl-tRNA(Leu) = N-terminal L-leucyl-L-arginyl-[protein] + tRNA(Leu) + H(+). The enzyme catalyses L-phenylalanyl-tRNA(Phe) + an N-terminal L-alpha-aminoacyl-[protein] = an N-terminal L-phenylalanyl-L-alpha-aminoacyl-[protein] + tRNA(Phe). Functionally, functions in the N-end rule pathway of protein degradation where it conjugates Leu, Phe and, less efficiently, Met from aminoacyl-tRNAs to the N-termini of proteins containing an N-terminal arginine or lysine. This Yersinia pseudotuberculosis serotype O:1b (strain IP 31758) protein is Leucyl/phenylalanyl-tRNA--protein transferase.